The sequence spans 450 residues: Na(+)/H(+) antiporter NhaA 2 (450 aa).

12 consecutive transmembrane segments (helical) span residues 43–63, 86–106, 124–144, 155–175, 185–205, 208–228, 234–254, 258–278, 299–319, 326–346, 364–384, and 398–418; these read VGGA…NSPW, LTLG…VVGL, ALPM…FVAV, GWAI…AVIS, FLLT…AVFY, EINL…ALCV, SWWL…ESGV, VAGV…AGGP, VAVP…VSGL, PITL…IFLT, WIDV…SLLI, and FVKV…AVLL.

The protein belongs to the NhaA Na(+)/H(+) (TC 2.A.33) antiporter family.

It is found in the cell membrane. It catalyses the reaction Na(+)(in) + 2 H(+)(out) = Na(+)(out) + 2 H(+)(in). Na(+)/H(+) antiporter that extrudes sodium in exchange for external protons. This Mycobacterium sp. (strain JLS) protein is Na(+)/H(+) antiporter NhaA 2.